Reading from the N-terminus, the 142-residue chain is FAD synthase (142 aa).

Residues 9-10 (TF), 14-17 (HPGH), and Asp92 contribute to the ATP site.

It belongs to the archaeal FAD synthase family. Homodimer. A divalent metal cation serves as cofactor.

The catalysed reaction is FMN + ATP + H(+) = FAD + diphosphate. It functions in the pathway cofactor biosynthesis; FAD biosynthesis; FAD from FMN: step 1/1. In terms of biological role, catalyzes the transfer of the AMP portion of ATP to flavin mononucleotide (FMN) to produce flavin adenine dinucleotide (FAD) coenzyme. The chain is FAD synthase from Haloferax volcanii (strain ATCC 29605 / DSM 3757 / JCM 8879 / NBRC 14742 / NCIMB 2012 / VKM B-1768 / DS2) (Halobacterium volcanii).